Reading from the N-terminus, the 602-residue chain is MTKEIDINKLLAQENNALNTILSQVNELCEQNKQLQGLIEIQNETKALEKEYNRSLPWFKRFVNTVSNVKYIFIKSEEQLTNEAIKYNNKILKDIDNKIYNIAEKSVSLKQELQEEIEKNFKDLTKKDLSKDQRERLSEVFFSYKSKPERFSALHMTNPLQFINAEELEKQYNSLNATKQNIQNLISENSNVKELKEIQKQVAEIREEVPYTFFEKLNNIWQNVKNVFVNNSEQVLAKNKESNTRTIRKIDEQLYKTKHKFEELIENKERNINDIIAKLPDNEELQKIVSNLTNHMASTKEPILTNSSLAKPLENNITPPPPLPGNNIPSPPPPPPPLPGNNIPSPPPPPPPLPGNNIPSPPPPPPPLPGNNIPSPPPPPPPLSGNNIPSPPPPPPPLSGNNIPSPPPPPPPLPGNNIPSPPPPPPPLSQNNIPPPPPPPMAPVSAQTEKLSKPVEATTVKKPENQPRPSIDTSDLMREIAGPKKLRKVEETDVKVQDSRDLLLQSIRGEHKLKKVEFDPNTGKPVAHSHSKPVQNVNKLSGVASILARRVVMEMSDSSGSESDSGNWSDVGVNRNTKTLKTKRERRKILNNRNSQKPSFVK.

Disordered regions lie at residues 307-484 (SSLA…AGPK), 516-535 (VEFDPNTGKPVAHSHSKPVQ), and 555-602 (MSDS…SFVK). Over residues 318-442 (TPPPPLPGNN…IPPPPPPPMA (125 aa)) the composition is skewed to pro residues. WH2 domains are found at residues 472 to 489 (DTSDLMREIAGPKKLRKV) and 499 to 516 (SRDLLLQSIRGEHKLKKV). Positions 475-484 (DLMREIAGPK) are enriched in basic and acidic residues. The interval 537–570 (VNKLSGVASILARRVVMEMSDSSGSESDSGNWSD) is central and acidic domains. A compositionally biased stretch (low complexity) spans 555–566 (MSDSSGSESDSG). Residues 578–590 (KTLKTKRERRKIL) show a composition bias toward basic residues. Positions 591–602 (NNRNSQKPSFVK) are enriched in polar residues.

As to quaternary structure, homodimer.

It localises to the cell surface. Functionally, recruits and activates the Arp2/3 complex, which in turn leads to actin polymerization, promoting Rickettsia motility during infection. This chain is Arp2/3 complex-activating protein rickA (rickA), found in Rickettsia montanensis.